Consider the following 128-residue polypeptide: Fluoride-specific ion channel FluC (128 aa).

The next 4 helical transmembrane spans lie at 3–23, 33–53, 69–89, and 99–119; these read LYAL…RWWF, TLPL…GAAI, FAIT…AETV, and WTFV…ILGI. Na(+) is bound by residues Gly76 and Thr79.

It belongs to the fluoride channel Fluc/FEX (TC 1.A.43) family.

Its subcellular location is the cell inner membrane. The catalysed reaction is fluoride(in) = fluoride(out). Its activity is regulated as follows. Na(+) is not transported, but it plays an essential structural role and its presence is essential for fluoride channel function. Fluoride-specific ion channel. Important for reducing fluoride concentration in the cell, thus reducing its toxicity. The sequence is that of Fluoride-specific ion channel FluC from Nitrosospira multiformis (strain ATCC 25196 / NCIMB 11849 / C 71).